A 514-amino-acid chain; its full sequence is L-carnitine/gamma-butyrobetaine antiporter (514 aa).

Residues 1-11 (MSKDNKKAGIE) are Cytoplasmic-facing. A helical membrane pass occupies residues 12–30 (PKVFFPPLIIVGILCWLTV). Residues 31–42 (RDLDASNEVINA) lie on the Periplasmic side of the membrane. Residues 43 to 68 (VFSYVTNVWGWAFEWYMVIMFGGWFW) form a helical membrane-spanning segment. Residues 69–91 (LVFGRYAKKRLGDEKPEFSTASW) lie on the Cytoplasmic side of the membrane. The helical transmembrane segment at 92–112 (IFMMFASCTSAAVLFWGSIEI) threads the bilayer. Residues 113-131 (YYYISSPPFGMEGYSAPAK) lie on the Periplasmic side of the membrane. The chain crosses the membrane as a helical span at residues 132–154 (EIGLAYSLFHWGPLPWATYSFLS). Residues 155-185 (VAFAYFFFVRKMEVIRPSSTLTPLVGEKHVN) lie on the Cytoplasmic side of the membrane. A helical transmembrane segment spans residues 186–216 (GLFGTVVDNFYLVALILAMGTSLGLATPLVT). Residues 217–230 (ECIQYLFGIPHTLQ) lie on the Periplasmic side of the membrane. Residues 231-249 (LDAIIISCWILLNAICVAF) traverse the membrane as a helical segment. The Cytoplasmic portion of the chain corresponds to 250 to 251 (GL). Residues 252–277 (QKGVKIASDVRTYLSFLMLGWVFIVG) form a helical membrane-spanning segment. Residues 278 to 311 (GASFIVNYFTDSVGTLLMYMPRMLFYTDPIGKGG) are Periplasmic-facing. Residues 312 to 335 (FPQAWTVFYWAWWVIYAIQMSIFL) traverse the membrane as a helical segment. Over 336-347 (ARISKGRTVREL) the chain is Cytoplasmic. The helical transmembrane segment at 348-369 (CLGMVSGLTAGTWLIWTILGGN) threads the bilayer. The Periplasmic segment spans residues 370–404 (TLQLIDQNILNIPQLIDQYGVPRAIIETWAALPLS). The helical transmembrane segment at 405 to 434 (TATMWGFFILCFIATVTLINACSYTLAMST) threads the bilayer. At 435–445 (CRSMKEGAEPP) the chain is on the cytoplasmic side. A helical membrane pass occupies residues 446–464 (LLVRIGWSVLVGIIGIILL). Residues 465–468 (ALGG) are Periplasmic-facing. Residues 469–492 (LKPIQTAIIAGGCPLFFVNIMVTL) traverse the membrane as a helical segment. At 493 to 514 (SFIKDAKVHWKDCSPYTQKMTH) the chain is on the cytoplasmic side.

It belongs to the BCCT transporter (TC 2.A.15) family. CaiT subfamily. In terms of assembly, homotrimer.

It is found in the cell inner membrane. The catalysed reaction is 4-(trimethylamino)butanoate(in) + (R)-carnitine(out) = 4-(trimethylamino)butanoate(out) + (R)-carnitine(in). Its pathway is amine and polyamine metabolism; carnitine metabolism. Catalyzes the exchange of L-carnitine for gamma-butyrobetaine. This chain is L-carnitine/gamma-butyrobetaine antiporter, found in Proteus mirabilis (strain HI4320).